Reading from the N-terminus, the 169-residue chain is NAD(P)H-quinone oxidoreductase subunit J, chloroplastic (169 aa).

Belongs to the complex I 30 kDa subunit family. NDH is composed of at least 16 different subunits, 5 of which are encoded in the nucleus.

The protein resides in the plastid. The protein localises to the chloroplast thylakoid membrane. The enzyme catalyses a plastoquinone + NADH + (n+1) H(+)(in) = a plastoquinol + NAD(+) + n H(+)(out). It catalyses the reaction a plastoquinone + NADPH + (n+1) H(+)(in) = a plastoquinol + NADP(+) + n H(+)(out). Its function is as follows. NDH shuttles electrons from NAD(P)H:plastoquinone, via FMN and iron-sulfur (Fe-S) centers, to quinones in the photosynthetic chain and possibly in a chloroplast respiratory chain. The immediate electron acceptor for the enzyme in this species is believed to be plastoquinone. Couples the redox reaction to proton translocation, and thus conserves the redox energy in a proton gradient. This chain is NAD(P)H-quinone oxidoreductase subunit J, chloroplastic, found in Anthoceros angustus (Hornwort).